The sequence spans 158 residues: Small ribosomal subunit protein uS17 (158 aa).

Ala-2 is subject to N-acetylalanine. Residue Arg-22 is modified to Citrulline. N6-acetyllysine is present on residues Lys-38, Lys-45, and Lys-58. A lipid anchor (S-palmitoyl cysteine) is attached at Cys-60. Position 67 is a phosphoserine (Ser-67). Position 69 is an omega-N-methylarginine (Arg-69). Ser-110 carries the phosphoserine modification.

It belongs to the universal ribosomal protein uS17 family. In terms of assembly, component of the small ribosomal subunit. Part of the small subunit (SSU) processome, composed of more than 70 proteins and the RNA chaperone small nucleolar RNA (snoRNA) U3. Citrullinated by PADI4.

It localises to the cytoplasm. The protein resides in the nucleus. It is found in the nucleolus. In terms of biological role, component of the small ribosomal subunit. The ribosome is a large ribonucleoprotein complex responsible for the synthesis of proteins in the cell. Part of the small subunit (SSU) processome, first precursor of the small eukaryotic ribosomal subunit. During the assembly of the SSU processome in the nucleolus, many ribosome biogenesis factors, an RNA chaperone and ribosomal proteins associate with the nascent pre-rRNA and work in concert to generate RNA folding, modifications, rearrangements and cleavage as well as targeted degradation of pre-ribosomal RNA by the RNA exosome. This is Small ribosomal subunit protein uS17 (Rps11) from Mus musculus (Mouse).